Reading from the N-terminus, the 217-residue chain is Adenylate kinase (217 aa).

Position 10–15 (10–15 (GAGKGT)) interacts with ATP. The interval 30–59 (STGDIFRKNVADDTPLGRLAKQYMDAGDLV) is NMP. Residues T31, R36, 57-59 (DLV), 85-88 (GFPR), and Q92 each bind AMP. Residues 126 to 163 (GRRTCADCAHVWHVTYDPPTVDGVCDLCGGKLFQREDD) are LID. R127 provides a ligand contact to ATP. C130, C133, C150, and C153 together coordinate Zn(2+). AMP-binding residues include R160 and R171. G199 provides a ligand contact to ATP.

The protein belongs to the adenylate kinase family. In terms of assembly, monomer.

Its subcellular location is the cytoplasm. The catalysed reaction is AMP + ATP = 2 ADP. Its pathway is purine metabolism; AMP biosynthesis via salvage pathway; AMP from ADP: step 1/1. Its function is as follows. Catalyzes the reversible transfer of the terminal phosphate group between ATP and AMP. Plays an important role in cellular energy homeostasis and in adenine nucleotide metabolism. The chain is Adenylate kinase from Acidothermus cellulolyticus (strain ATCC 43068 / DSM 8971 / 11B).